A 764-amino-acid chain; its full sequence is Polymeric immunoglobulin receptor (764 aa).

The first 18 residues, 1–18 (MLLFVLTCLLAVFPAIST), serve as a signal peptide directing secretion. The Ig-like V-type 1; required for binding to polymeric IgA and IgM domain maps to 19-120 (KSPIFGPEEV…GLGINSRGLS (102 aa)). The Extracellular portion of the chain corresponds to 19 to 638 (KSPIFGPEEV…SSEEQGGSSR (620 aa)). Intrachain disulfides connect C40-C110 and C56-C64. N-linked (GlcNAc...) asparagine glycans are attached at residues N83, N90, N135, and N186. 4 Ig-like V-type domains span residues 145–237 (GRTV…DLQV), 250–352 (RGSV…ESTI), 364–458 (GGSV…IKII), and 462–561 (PNLK…VYVA). Intrachain disulfides connect C152–C220, C257–C325, C271–C279, C371–C441, and C385–C395. N421 is a glycosylation site (N-linked (GlcNAc...) asparagine). A glycan (N-linked (GlcNAc...) (complex) asparagine) is linked at N469. 3 disulfides stabilise this stretch: C482-C544, C486-C520, and C496-C503. N499 is a glycosylation site (N-linked (GlcNAc...) asparagine). Positions 609 to 619 (KAVADTRDQAD) are enriched in basic and acidic residues. Residues 609 to 637 (KAVADTRDQADGSRASVDSGSSEEQGGSS) form a disordered region. The segment covering 627–637 (SGSSEEQGGSS) has biased composition (low complexity). Residues 639-661 (ALVSTLVPLGLVLAVGAVAVGVA) form a helical membrane-spanning segment. The Cytoplasmic portion of the chain corresponds to 662–764 (RARHRKNVDR…AEAQDGPQEA (103 aa)). S673, S682, S689, and S735 each carry phosphoserine. Residues 717-738 (ATTESTTETKEPKKAKRSSKEE) form a disordered region. Residues 723 to 738 (TETKEPKKAKRSSKEE) show a composition bias toward basic and acidic residues.

As to quaternary structure, interacts (mainly via CDR1-like domain) with dimeric IgA. Interacts (mainly via CDR2-like domain) with pentameric IgM. Either free or part of the secretory IgA (sIgA) complex that consists of two, four or five IgA monomers, and two additional non-Ig polypeptides, namely the JCHAIN and the secretory component (the proteolytic product of PIGR). Free secretory component interacts with bacterial antigens toxA of C.difficile and eaeA of E.coli. N-glycosylated. N-glycosylation is required for anchoring IgA molecules to mucus, but is not necessary for Ig binding.

It localises to the cell membrane. It is found in the secreted. In terms of biological role, mediates selective transcytosis of polymeric IgA and IgM across mucosal epithelial cells. Binds polymeric IgA and IgM at the basolateral surface of epithelial cells. The complex is then transported across the cell to be secreted at the apical surface. During this process, a cleavage occurs that separates the extracellular (known as the secretory component) from the transmembrane segment. Functionally, through its N-linked glycans ensures anchoring of secretory IgA (sIgA) molecules to mucus lining the epithelial surface to neutralize extracellular pathogens. On its own (free form) may act as a non-specific microbial scavenger to prevent pathogen interaction with epithelial cells. The sequence is that of Polymeric immunoglobulin receptor (PIGR) from Homo sapiens (Human).